Here is a 173-residue protein sequence, read N- to C-terminus: Large ribosomal subunit protein uL10 (173 aa).

This sequence belongs to the universal ribosomal protein uL10 family. Part of the ribosomal stalk of the 50S ribosomal subunit. The N-terminus interacts with L11 and the large rRNA to form the base of the stalk. The C-terminus forms an elongated spine to which L12 dimers bind in a sequential fashion forming a multimeric L10(L12)X complex.

In terms of biological role, forms part of the ribosomal stalk, playing a central role in the interaction of the ribosome with GTP-bound translation factors. The sequence is that of Large ribosomal subunit protein uL10 from Nitratidesulfovibrio vulgaris (strain ATCC 29579 / DSM 644 / CCUG 34227 / NCIMB 8303 / VKM B-1760 / Hildenborough) (Desulfovibrio vulgaris).